The primary structure comprises 328 residues: GMP reductase (328 aa).

Cys177 serves as the catalytic Thioimidate intermediate. 206–229 contacts NADP(+); sequence IVADGGIRYNGDIAKSIRFGASMV.

This sequence belongs to the IMPDH/GMPR family. GuaC type 2 subfamily.

It catalyses the reaction IMP + NH4(+) + NADP(+) = GMP + NADPH + 2 H(+). In terms of biological role, catalyzes the irreversible NADPH-dependent deamination of GMP to IMP. It functions in the conversion of nucleobase, nucleoside and nucleotide derivatives of G to A nucleotides, and in maintaining the intracellular balance of A and G nucleotides. The sequence is that of GMP reductase from Levilactobacillus brevis (strain ATCC 367 / BCRC 12310 / CIP 105137 / JCM 1170 / LMG 11437 / NCIMB 947 / NCTC 947) (Lactobacillus brevis).